The primary structure comprises 702 residues: Ribosomal RNA large subunit methyltransferase K/L (702 aa).

One can recognise a THUMP domain in the interval 43-154 (LVYQSLMWSR…KETASIALDL (112 aa)).

The protein belongs to the methyltransferase superfamily. RlmKL family.

Its subcellular location is the cytoplasm. It carries out the reaction guanosine(2445) in 23S rRNA + S-adenosyl-L-methionine = N(2)-methylguanosine(2445) in 23S rRNA + S-adenosyl-L-homocysteine + H(+). It catalyses the reaction guanosine(2069) in 23S rRNA + S-adenosyl-L-methionine = N(2)-methylguanosine(2069) in 23S rRNA + S-adenosyl-L-homocysteine + H(+). Functionally, specifically methylates the guanine in position 2445 (m2G2445) and the guanine in position 2069 (m7G2069) of 23S rRNA. This is Ribosomal RNA large subunit methyltransferase K/L from Escherichia coli O157:H7.